A 101-amino-acid polypeptide reads, in one-letter code: Small ribosomal subunit protein uS10 (101 aa).

This sequence belongs to the universal ribosomal protein uS10 family. In terms of assembly, part of the 30S ribosomal subunit.

Its function is as follows. Involved in the binding of tRNA to the ribosomes. In Brachyspira pilosicoli (Serpulina pilosicoli), this protein is Small ribosomal subunit protein uS10.